We begin with the raw amino-acid sequence, 548 residues long: Membrane protein insertase YidC (548 aa).

The chain crosses the membrane as a helical span at residues 6–26; the sequence is NLLVIALLFVSFMIWQAWEQD. A disordered region spans residues 28 to 54; that stretch reads NPQPQTQQTTQTTTTAAGSAADQGVPA. The span at 29-42 shows a compositional bias: low complexity; the sequence is PQPQTQQTTQTTTT. 4 consecutive transmembrane segments (helical) span residues 350–370, 424–444, 458–478, and 499–519; these read FLGNWGFSIIVITFIVRGIMY, FPLIIQMPIFLALYYMLMGSI, LSAQDPYYILPILMGVTMFFI, and PVIFTVFFLWFPSGLVLYYIV.

This sequence belongs to the OXA1/ALB3/YidC family. Type 1 subfamily. As to quaternary structure, interacts with the Sec translocase complex via SecD. Specifically interacts with transmembrane segments of nascent integral membrane proteins during membrane integration.

It is found in the cell inner membrane. Its function is as follows. Required for the insertion and/or proper folding and/or complex formation of integral membrane proteins into the membrane. Involved in integration of membrane proteins that insert both dependently and independently of the Sec translocase complex, as well as at least some lipoproteins. Aids folding of multispanning membrane proteins. The protein is Membrane protein insertase YidC of Citrobacter koseri (strain ATCC BAA-895 / CDC 4225-83 / SGSC4696).